Reading from the N-terminus, the 216-residue chain is Peptide deformylase (216 aa).

The Fe cation site is built by C134 and H178. E179 is a catalytic residue. H182 contributes to the Fe cation binding site.

It belongs to the polypeptide deformylase family. It depends on Fe(2+) as a cofactor.

It catalyses the reaction N-terminal N-formyl-L-methionyl-[peptide] + H2O = N-terminal L-methionyl-[peptide] + formate. In terms of biological role, removes the formyl group from the N-terminal Met of newly synthesized proteins. Requires at least a dipeptide for an efficient rate of reaction. N-terminal L-methionine is a prerequisite for activity but the enzyme has broad specificity at other positions. The sequence is that of Peptide deformylase from Mycoplasma pneumoniae (strain ATCC 29342 / M129 / Subtype 1) (Mycoplasmoides pneumoniae).